The chain runs to 500 residues: E3 ubiquitin-protein ligase TRIM69 (500 aa).

Residues 1–152 are necessary for nuclear localization; it reads MEVSTNPSSN…SVGQSKEFLQ (152 aa). An RING-type zinc finger spans residues 41 to 82; sequence CPLCNDWFRDPLMLSCGHNFCEACIQDFWRLQAKETFCPECK. Residues 161-255 adopt a coiled-coil conformation; that stretch reads TEELAIQQGQ…QCLLAKDMLV (95 aa). The B30.2/SPRY domain occupies 305-500; sequence PIQYMVWREM…KEPLHILHPQ (196 aa). Ser-341 is subject to Phosphoserine.

It belongs to the TRIM/RBCC family. In terms of assembly, homo-multimer; required for antiviral activity. Interacts with PML. Phosphorylated. Phosphorylation is necessary for nuclear localization.

Its subcellular location is the cytoplasm. It localises to the nucleus. The protein resides in the nucleus speckle. It is found in the cytoskeleton. The protein localises to the microtubule organizing center. Its subcellular location is the centrosome. It carries out the reaction S-ubiquitinyl-[E2 ubiquitin-conjugating enzyme]-L-cysteine + [acceptor protein]-L-lysine = [E2 ubiquitin-conjugating enzyme]-L-cysteine + N(6)-ubiquitinyl-[acceptor protein]-L-lysine.. The protein operates within protein modification; protein ubiquitination. Its function is as follows. E3 ubiquitin ligase that plays an important role in antiviral immunity by restricting different viral infections including dengue virus or vesicular stomatitis indiana virus. Ubiquitinates viral proteins such as dengue virus NS3 thereby limiting infection. In addition, acts as a key mediator of type I interferon induced microtubule stabilization by directly associating to microtubules independently of its E3 ligase activity. Also plays a role in cataract formation together with TP53. Mechanistically, inhibits UVB-induced cell apoptosis and reactive oxygen species (ROS) production by inducing TP53 ubiquitination. Regulates centrosome dynamics and mitotic progression by ubiquitinating STK3/MST2; leading to its redistribution to the perinuclear cytoskeleton and subsequent phosphorylation by PLK1. In Homo sapiens (Human), this protein is E3 ubiquitin-protein ligase TRIM69 (TRIM69).